Reading from the N-terminus, the 86-residue chain is Toxin CngtIV (86 aa).

An N-terminal signal peptide occupies residues 1–19 (MNSLLIITACLVLIGTVWA). One can recognise an LCN-type CS-alpha/beta domain in the interval 20 to 84 (KDGYLVDVKG…TWPLPNKRCG (65 aa)). 4 disulfide bridges follow: Cys-30–Cys-83, Cys-34–Cys-59, Cys-43–Cys-64, and Cys-47–Cys-66.

The protein belongs to the long (4 C-C) scorpion toxin superfamily. Sodium channel inhibitor family. Beta subfamily. In terms of tissue distribution, expressed by the venom gland.

Its subcellular location is the secreted. In terms of biological role, beta toxins bind voltage-independently at site-4 of sodium channels (Nav) and shift the voltage of activation toward more negative potentials thereby affecting sodium channel activation and promoting spontaneous and repetitive firing. The protein is Toxin CngtIV of Centruroides noxius (Mexican scorpion).